Reading from the N-terminus, the 504-residue chain is uncharacterized protein (504 aa).

This is an uncharacterized protein from Klebsiella pneumoniae.